The following is a 763-amino-acid chain: Xaa-Pro dipeptidyl-peptidase (763 aa).

Catalysis depends on charge relay system residues Ser-348, Asp-468, and His-498.

Belongs to the peptidase S15 family. As to quaternary structure, homodimer.

Its subcellular location is the cytoplasm. It carries out the reaction Hydrolyzes Xaa-Pro-|- bonds to release unblocked, N-terminal dipeptides from substrates including Ala-Pro-|-p-nitroanilide and (sequentially) Tyr-Pro-|-Phe-Pro-|-Gly-Pro-|-Ile.. Its function is as follows. Removes N-terminal dipeptides sequentially from polypeptides having unsubstituted N-termini provided that the penultimate residue is proline. This chain is Xaa-Pro dipeptidyl-peptidase (pepX), found in Lactococcus lactis subsp. lactis (strain IL1403) (Streptococcus lactis).